An 827-amino-acid polypeptide reads, in one-letter code: Putative transcriptional regulatory protein C16G5.16 (827 aa).

A DNA-binding region (zn(2)-C6 fungal-type) is located at residues 16–42 (CDECHRRKIKCDQRRPCSNCIAYNYEC). 3 disordered regions span residues 80–114 (LKLPSFLAPPNDKDSPVNQSPWKRSDSSKRSSSQD), 158–193 (TVPNPVQESNSSSSQPDPLSFPYLPPTPAEDEHKKP), and 794–827 (QPPSMTNQVAYPTVRDGSNNSPDHPSSSNSKRTE). A compositionally biased stretch (basic and acidic residues) spans 102–112 (KRSDSSKRSSS). At serine 112 the chain carries Phosphoserine. Composition is skewed to low complexity over residues 159–179 (VPNPVQESNSSSSQPDPLSFP) and 811–827 (SNNSPDHPSSSNSKRTE).

Belongs to the ASG1 family.

It is found in the cytoplasm. The protein localises to the nucleus. This Schizosaccharomyces pombe (strain 972 / ATCC 24843) (Fission yeast) protein is Putative transcriptional regulatory protein C16G5.16.